Reading from the N-terminus, the 226-residue chain is Translation initiation factor 6 (226 aa).

This sequence belongs to the eIF-6 family.

Binds to the 50S ribosomal subunit and prevents its association with the 30S ribosomal subunit to form the 70S initiation complex. This Haloquadratum walsbyi (strain DSM 16790 / HBSQ001) protein is Translation initiation factor 6.